The following is a 2472-amino-acid chain: Telomere-associated protein RIF1 (2472 aa).

Residues 1 to 25 (MTARGQSPLAPLLETLEDPSASHGG) form a disordered region. Phosphoserine is present on Ser402. Thr409 is modified (phosphothreonine). A phosphoserine mark is found at Ser782, Ser979, and Ser1008. Position 1047 is a phosphothreonine (Thr1047). Residues 1145–1192 (LEKSSLSNNECGSLDKTSPEMSNSNNDERKKALISSRKTSTECASSTE) form a disordered region. A compositionally biased stretch (polar residues) spans 1148–1169 (SSLSNNECGSLDKTSPEMSNSN). Phosphoserine is present on Ser1162. The residue at position 1220 (Thr1220) is a Phosphothreonine. A phosphoserine mark is found at Ser1236 and Ser1238. 2 stretches are compositionally biased toward basic and acidic residues: residues 1265-1279 (AKQR…DSEK) and 1306-1315 (MRSEPEKNTE). Disordered stretches follow at residues 1265–1318 (AKQR…EESV), 1398–1464 (MVNE…DVLP), and 1479–1587 (IEKG…DQEE). The span at 1400-1412 (NEDSQVQITPNQK) shows a compositional bias: polar residues. Phosphoserine occurs at positions 1422, 1454, and 1513. Basic and acidic residues-rich tracts occupy residues 1431–1464 (SQDK…DVLP) and 1500–1530 (EQNK…EKLV). Position 1518 is a phosphothreonine (Thr1518). 5 positions are modified to phosphoserine: Ser1542, Ser1552, Ser1554, Ser1556, and Ser1564. Basic residues predominate over residues 1565-1574 (RKKRSGKWKN). Residues Ser1576, Ser1579, Ser1613, Ser1616, Ser1688, Ser1693, Ser1706, and Ser1709 each carry the phosphoserine modification. The segment at 1762–1782 (TKKADVQAPVSPSETSQANPY) is disordered. Over residues 1771-1782 (VSPSETSQANPY) the composition is skewed to polar residues. Thr1806 is subject to Phosphothreonine. The residue at position 1810 (Ser1810) is a Phosphoserine. Polar residues predominate over residues 1846–1859 (AMSLESQESPNENF). The interval 1846 to 1889 (AMSLESQESPNENFKTVGPCLGDSKNVSQESLETKEEKPEETPK) is disordered. 2 positions are modified to phosphoserine: Ser1873 and Ser1876. Basic and acidic residues predominate over residues 1877 to 1889 (LETKEEKPEETPK). The interaction with condensed chromosomes in telophase stretch occupies residues 1924 to 2472 (EASFHGQERT…WRSPSHENSI (549 aa)). Phosphoserine is present on residues Ser1926 and Ser1971. Residues 1992-2021 (EQTAAGELDGGNDVSDLHSSEETNTKMKNN) form a disordered region. A compositionally biased stretch (basic and acidic residues) spans 2006 to 2021 (SDLHSSEETNTKMKNN). Phosphoserine is present on residues Ser2144 and Ser2161. Thr2167 carries the phosphothreonine modification. Positions 2170 to 2446 (VWSPLASPST…SGSQLFEMHE (277 aa)) are interaction with ERCC6. Phosphoserine is present on residues Ser2172, Ser2176, Ser2195, Ser2196, and Ser2205. Positions 2227–2255 (RSHSSNSSPIGKSVKTSPTTQSKHNTTSA) are enriched in polar residues. The disordered stretch occupies residues 2227 to 2269 (RSHSSNSSPIGKSVKTSPTTQSKHNTTSAKGFLSPGSRSPKFK). Phosphoserine occurs at positions 2260, 2339, 2391, 2393, 2465, and 2471.

Belongs to the RIF1 family. In terms of assembly, interacts with TP53BP1 (when phosphorylated by ATM). May interact with TRF2. Interacts with SHLD2. Interacts with ERCC6 (via WHD region). Interacts with ASTE1. As to expression, highly expressed in testis.

The protein localises to the nucleus. It is found in the chromosome. The protein resides in the telomere. It localises to the cytoplasm. Its subcellular location is the cytoskeleton. The protein localises to the spindle. Its function is as follows. Key regulator of TP53BP1 that plays a key role in the repair of double-strand DNA breaks (DSBs) in response to DNA damage: acts by promoting non-homologous end joining (NHEJ)-mediated repair of DSBs. In response to DNA damage, interacts with ATM-phosphorylated TP53BP1. Interaction with TP53BP1 leads to dissociate the interaction between NUDT16L1/TIRR and TP53BP1, thereby unmasking the tandem Tudor-like domain of TP53BP1 and allowing recruitment to DNA DSBs. Once recruited to DSBs, RIF1 and TP53BP1 act by promoting NHEJ-mediated repair of DSBs. In the same time, RIF1 and TP53BP1 specifically counteract the function of BRCA1 by blocking DSBs resection via homologous recombination (HR) during G1 phase. Also required for immunoglobulin class-switch recombination (CSR) during antibody genesis, a process that involves the generation of DNA DSBs. Promotes NHEJ of dysfunctional telomeres. The sequence is that of Telomere-associated protein RIF1 from Homo sapiens (Human).